The sequence spans 171 residues: MYVMFLLSILLVLGFVSISSKPSPIYGGVGLIVSGAVGCGIIMGFGGSFMGLMVFLIYLGGMLVVFGYTTAMATEEYPETWGSNVVIWGVVLLGVGMELFMVAWMVEYGGFGVGDVFGGVENWMIFESKEGGVIREDSLGVASLYNKASWFAAIAGWSLFISVLIVIEIIR.

5 helical membrane-spanning segments follow: residues 1 to 21 (MYVM…ISSK), 25 to 44 (IYGG…IIMG), 49 to 71 (FMGL…YTTA), 85 to 105 (VVIW…VAWM), and 150 to 170 (WFAA…IEII).

It belongs to the complex I subunit 6 family. In terms of assembly, core subunit of respiratory chain NADH dehydrogenase (Complex I) which is composed of 45 different subunits.

The protein resides in the mitochondrion inner membrane. The catalysed reaction is a ubiquinone + NADH + 5 H(+)(in) = a ubiquinol + NAD(+) + 4 H(+)(out). In terms of biological role, core subunit of the mitochondrial membrane respiratory chain NADH dehydrogenase (Complex I) which catalyzes electron transfer from NADH through the respiratory chain, using ubiquinone as an electron acceptor. Essential for the catalytic activity and assembly of complex I. This Lemur catta (Ring-tailed lemur) protein is NADH-ubiquinone oxidoreductase chain 6 (MT-ND6).